A 207-amino-acid chain; its full sequence is Venom allergen 5 (207 aa).

3 cysteine pairs are disulfide-bonded: Cys-4–Cys-16, Cys-8–Cys-105, and Cys-29–Cys-97. The SCP domain maps to 49 to 192 (DEHNRFRQKV…MKSHYLVCNY (144 aa)). Tyr-111 is subject to Phosphotyrosine. Lys-141 carries N-linked (Glc) (glycation) lysine glycosylation. Cys-173 and Cys-190 are oxidised to a cystine.

Belongs to the CRISP family. Venom allergen 5-like subfamily. In terms of processing, glycosylated. As to expression, expressed by the venom gland.

The protein resides in the secreted. The sequence is that of Venom allergen 5 from Polybia paulista (Neotropical social wasp).